A 122-amino-acid chain; its full sequence is Phospholipase A2 crotoxin basic subunit CBd (122 aa).

Disulfide bonds link C26/C115, C28/C44, C43/C95, C49/C122, C50/C88, C57/C81, and C75/C86. Ca(2+) contacts are provided by Y27, G29, and G31. H47 is an active-site residue. Ca(2+) is bound at residue D48. The active site involves D89.

The protein belongs to the phospholipase A2 family. Group II subfamily. D49 sub-subfamily. In terms of assembly, heterodimer of one of the acidic (CA1, CA2, CA3 or CA4) and one of the basic (CBa1, CBa2, CBb, CBc or CBd) subunits; non-covalently linked. The acidic subunit is non-toxic, without enzymatic activity and comprises 3 peptides that are cross-linked by 5 disulfide bridges. The basic subunit is toxic, has phospholipase A2 activity and is composed of a single chain. Multiple variants of each subunit give different crotoxin complexes that can be subdivided into 2 classes: (1) those of high toxicity, low PLA2 activity (CBb, CBc and CBd linked with high affinity to any CA) and high stability (K(d)=4.5 nM) and (2) those of moderate toxicity, high PLA2 activity (CBa2 linked with low affinity to any CA) and low stability (K(d)=25 nM). Interacts with crotoxin inhibitor from Crotalus serum (CICS); the interaction leads to dissociation of the CA-CB heterodimer and to inhibition of PLA2 activity of the CB subunit. Interacts with human NBD1 domain of CFTR. Ca(2+) is required as a cofactor. As to expression, expressed by the venom gland.

It is found in the secreted. The enzyme catalyses a 1,2-diacyl-sn-glycero-3-phosphocholine + H2O = a 1-acyl-sn-glycero-3-phosphocholine + a fatty acid + H(+). Functionally, heterodimer CA-CB: Crotoxin is a potent presynaptic neurotoxin that possesses phospholipase A2 (PLA2) activity and exerts a lethal action by blocking neuromuscular transmission. It consists of a non-covalent association of a basic and weakly toxic PLA2 subunit (CBa2, CBb, CBc, or CBd), with a small acidic, non-enzymatic and non-toxic subunit (CA1, CA2, CA3 or CA4). The complex acts by binding to a specific 48-kDa protein (R48) receptor located on presynaptic membranes, forming a transient ternary complex CA-CB-R48, followed by dissociation of the CA-CB complex and release of the CA subunit. At equilibrium, only the CB subunits remain associated with the specific crotoxin receptor. In addition to neurotoxicity, crotoxin has been found to exert myotoxicity, nephrotoxicity, and cardiovascular toxicity. Moreover, anti-inflammatory, immunomodulatory, anti-tumor and analgesic effects of crotoxin have also been reported. In terms of biological role, monomer CBd: The basic subunit of crotoxin is a snake venom phospholipase A2 (PLA2) that exhibits weak neurotoxicity (10-fold less than the heterodimer) and very strong anticoagulant effects by binding to factor Xa (F10) and inhibiting the prothrombinase activity. In addition, it shows the same effects described for the heterodimer and binds the nucleotide-binding domain (NBD1) of CFTR chloride channels and increases the channel current. PLA2 catalyzes the calcium-dependent hydrolysis of the 2-acyl groups in 3-sn-phosphoglycerides. This Crotalus durissus terrificus (South American rattlesnake) protein is Phospholipase A2 crotoxin basic subunit CBd.